The chain runs to 422 residues: MIARISKSDVWGSVDAPPSKSYTHRAIAIGSMGHYAKITGPLLSADTLATVSACRAFGADIRISGDTVEIAGVIGKPRVPEDVIDAKNSGTTLRLCSSIAALAEGATVFTGDSSLRKRPNGPLIKALNDLGAVCYSTRGTGTAPLIIHGVMKGGRISINGSISSQFISSLLISCPFAKNDTTILIEGELKSKPYVEVTLEMLEKAGCRIETNFEEFRIQCCQDYNLGEYRVPGDFSSASYPLAAAAVTGSRVTVGNLFPSKQGDAAILEHLLDMGANVFWDEEMGTVTVEGGRLHGIDIDAGQTPDLVPTLAVLAACAEGTTHINNAEHVRYKETDRLRAMATELRKMGVQIEERQDGLDIEGGRLTGATVDGHDDHRIVMALAVAGLAADGQTTISTAESVDISYPAFFADLGKLGAKVEV.

Residues Lys20, Ser21, and Arg25 each contribute to the 3-phosphoshikimate site. Residue Lys20 participates in phosphoenolpyruvate binding. Phosphoenolpyruvate contacts are provided by Gly90 and Arg118. Residues Ser163, Ser164, Gln165, Ser191, Asp306, and Lys333 each coordinate 3-phosphoshikimate. Gln165 lines the phosphoenolpyruvate pocket. The active-site Proton acceptor is Asp306. Positions 337 and 378 each coordinate phosphoenolpyruvate.

Belongs to the EPSP synthase family. In terms of assembly, monomer.

The protein localises to the cytoplasm. The catalysed reaction is 3-phosphoshikimate + phosphoenolpyruvate = 5-O-(1-carboxyvinyl)-3-phosphoshikimate + phosphate. Its pathway is metabolic intermediate biosynthesis; chorismate biosynthesis. Functionally, catalyzes the transfer of the enolpyruvyl moiety of phosphoenolpyruvate (PEP) to the 5-hydroxyl of shikimate-3-phosphate (S3P) to produce enolpyruvyl shikimate-3-phosphate and inorganic phosphate. The sequence is that of 3-phosphoshikimate 1-carboxyvinyltransferase from Methanocella arvoryzae (strain DSM 22066 / NBRC 105507 / MRE50).